Reading from the N-terminus, the 193-residue chain is Adenylate kinase (193 aa).

An ATP-binding site is contributed by 10-15 (GAGKGT). The interval 30–59 (STGDMLRAAVKAGTPIGLKAKAVMDAGGLV) is NMP. AMP is bound by residues T31, R36, 57-59 (GLV), 85-88 (GFPR), and Q92. An LID region spans residues 126 to 142 (KRAKETLAAGGTVRADD). R127 contacts ATP. The AMP site is built by R139 and R150. A178 lines the ATP pocket.

Belongs to the adenylate kinase family. In terms of assembly, monomer.

It localises to the cytoplasm. The enzyme catalyses AMP + ATP = 2 ADP. It participates in purine metabolism; AMP biosynthesis via salvage pathway; AMP from ADP: step 1/1. Its function is as follows. Catalyzes the reversible transfer of the terminal phosphate group between ATP and AMP. Plays an important role in cellular energy homeostasis and in adenine nucleotide metabolism. The polypeptide is Adenylate kinase (Beijerinckia indica subsp. indica (strain ATCC 9039 / DSM 1715 / NCIMB 8712)).